Here is a 78-residue protein sequence, read N- to C-terminus: Large ribosomal subunit protein bL28 (78 aa).

This sequence belongs to the bacterial ribosomal protein bL28 family.

The protein is Large ribosomal subunit protein bL28 of Dichelobacter nodosus (strain VCS1703A).